A 57-amino-acid chain; its full sequence is Large ribosomal subunit protein eL20 (57 aa).

The protein belongs to the eukaryotic ribosomal protein eL20 family. In terms of assembly, part of the 50S ribosomal subunit. Binds 23S rRNA.

The sequence is that of Large ribosomal subunit protein eL20 from Archaeoglobus fulgidus (strain ATCC 49558 / DSM 4304 / JCM 9628 / NBRC 100126 / VC-16).